Here is a 424-residue protein sequence, read N- to C-terminus: MSLHLLLAVSLCVALASSLPWAAASANGNGNGKPLVAAITKDAATSLYTVPIKDGRPLVLDLAGALVWMSCAAAHPTLECHHHFCMHAHSYHPPGCPHNGYGRADVEDPFRCKCTAHPYNPFSGESATADLTRTRLSANATDGKNPLYPVSFAAVTSCAPDSLLAKLPAGAVGVAGLARTRLALQAQVARSQKVANKFALCLPSGGGGDGVAIFGGGPLFLLPPGRPDVAATLAGETPLHRNKDLPGYFISATKIAVNQEQVQLYTQEPLVVELCTRIPYTALRPDVYRAVVDAFARATAGRKRVTPPPPPAAPFELCYDSRDLGSTRLGYAVPQIDLVLEGGKNWTVFGGNSMAQVSDNTACLAVVKVKGEKGSPPPPAAIIGGFQMENNLVVFDEEKQRLGFSGLLWGRQTTCSNFNFTLAA.

An N-terminal signal peptide occupies residues 1-18 (MSLHLLLAVSLCVALASS). The Peptidase A1 domain maps to 43–405 (AATSLYTVPI…DEEKQRLGFS (363 aa)). 3 N-linked (GlcNAc...) asparagine glycosylation sites follow: asparagine 139, asparagine 345, and asparagine 419.

This sequence belongs to the peptidase A1 family. Expressed in roots. Expressed at low levels in leaf sheaths, stems and flowers.

It localises to the secreted. It is found in the extracellular space. The protein resides in the apoplast. It carries out the reaction Random endo-hydrolysis of N-acetyl-beta-D-glucosaminide (1-&gt;4)-beta-linkages in chitin and chitodextrins.. Chitinase that possesses antifungal activity. Inhibits the growth of the fungal pathogen Rhizoctonia solani by degrading the fungal cell wall. Does not possess inhibiting activity against fungal endo-1,4-beta-D-xylanases belonging to glycoside hydrolase family 10 (GH10) and family 11 (GH11). Involved in the regulation of plant growth by regulating the intracellular calcium ion concentration in roots. The polypeptide is Chitinase CLP (Oryza sativa subsp. japonica (Rice)).